Here is a 555-residue protein sequence, read N- to C-terminus: Urocanate hydratase (555 aa).

NAD(+) is bound by residues Gly51–Gly52, Gln129, Gly175–Gly177, Glu195, Gln262–His266, Tyr272–Leu273, and Tyr321. The active site involves Cys409. Gly491 contributes to the NAD(+) binding site.

This sequence belongs to the urocanase family. It depends on NAD(+) as a cofactor.

It is found in the cytoplasm. The catalysed reaction is 4-imidazolone-5-propanoate = trans-urocanate + H2O. It participates in amino-acid degradation; L-histidine degradation into L-glutamate; N-formimidoyl-L-glutamate from L-histidine: step 2/3. In terms of biological role, catalyzes the conversion of urocanate to 4-imidazolone-5-propionate. This chain is Urocanate hydratase, found in Xanthomonas euvesicatoria pv. vesicatoria (strain 85-10) (Xanthomonas campestris pv. vesicatoria).